Here is a 379-residue protein sequence, read N- to C-terminus: Cytochrome b (379 aa).

The next 4 helical transmembrane spans lie at 33-53 (FGSLLGACLIIQVITGLFLAM), 77-98 (WMIRYLHANGASMFFLCLFIHV), 113-133 (WNVGIILLFSVMATAFMGYVL), and 178-198 (FFALHFILPFIISAWVMIHLL). 2 residues coordinate heme b: His-83 and His-97. His-182 and His-196 together coordinate heme b. Residue His-201 participates in a ubiquinone binding. 4 consecutive transmembrane segments (helical) span residues 226–246 (TKDFLGLLLLILLLMTLALFY), 288–308 (LGGVVALILSILILMIIPFLQ), 320–340 (LSQFLFWILVADLLTLTWIGG), and 347–367 (FISIGQTASMLYFSLMIFIMP).

The protein belongs to the cytochrome b family. The cytochrome bc1 complex contains 11 subunits: 3 respiratory subunits (MT-CYB, CYC1 and UQCRFS1), 2 core proteins (UQCRC1 and UQCRC2) and 6 low-molecular weight proteins (UQCRH/QCR6, UQCRB/QCR7, UQCRQ/QCR8, UQCR10/QCR9, UQCR11/QCR10 and a cleavage product of UQCRFS1). This cytochrome bc1 complex then forms a dimer. The cofactor is heme b.

The protein localises to the mitochondrion inner membrane. In terms of biological role, component of the ubiquinol-cytochrome c reductase complex (complex III or cytochrome b-c1 complex) that is part of the mitochondrial respiratory chain. The b-c1 complex mediates electron transfer from ubiquinol to cytochrome c. Contributes to the generation of a proton gradient across the mitochondrial membrane that is then used for ATP synthesis. The chain is Cytochrome b (MT-CYB) from Lepilemur septentrionalis (Northern sportive lemur).